Here is a 381-residue protein sequence, read N- to C-terminus: Homoserine O-succinyltransferase (381 aa).

An AB hydrolase-1 domain is found at 45-360 (NAVLVCHALN…PHGHDAFLLD (316 aa)). The active-site Nucleophile is Ser151. Arg221 is a binding site for substrate. Active-site residues include Asp321 and His354. Asp355 is a substrate binding site.

It belongs to the AB hydrolase superfamily. MetX family. As to quaternary structure, homodimer.

The protein resides in the cytoplasm. It catalyses the reaction L-homoserine + succinyl-CoA = O-succinyl-L-homoserine + CoA. It functions in the pathway amino-acid biosynthesis; L-methionine biosynthesis via de novo pathway; O-succinyl-L-homoserine from L-homoserine: step 1/1. In terms of biological role, transfers a succinyl group from succinyl-CoA to L-homoserine, forming succinyl-L-homoserine. The polypeptide is Homoserine O-succinyltransferase (Burkholderia lata (strain ATCC 17760 / DSM 23089 / LMG 22485 / NCIMB 9086 / R18194 / 383)).